The primary structure comprises 167 residues: Peptide deformylase (167 aa).

The Fe cation site is built by Cys91 and His133. Glu134 is a catalytic residue. His137 serves as a coordination point for Fe cation.

It belongs to the polypeptide deformylase family. It depends on Fe(2+) as a cofactor.

It catalyses the reaction N-terminal N-formyl-L-methionyl-[peptide] + H2O = N-terminal L-methionyl-[peptide] + formate. Functionally, removes the formyl group from the N-terminal Met of newly synthesized proteins. Requires at least a dipeptide for an efficient rate of reaction. N-terminal L-methionine is a prerequisite for activity but the enzyme has broad specificity at other positions. This chain is Peptide deformylase, found in Pseudoalteromonas translucida (strain TAC 125).